A 630-amino-acid polypeptide reads, in one-letter code: Ribonucleoside-diphosphate reductase large subunit (630 aa).

Substrate is bound by residues S67, 82–83 (AC), G111, 317–321 (NLCSE), and 459–463 (PNATS). Cysteines 83 and 334 form a disulfide. N317 (proton acceptor) is an active-site residue. C319 acts as the Cysteine radical intermediate in catalysis. E321 acts as the Proton acceptor in catalysis.

This sequence belongs to the ribonucleoside diphosphate reductase large chain family. As to quaternary structure, heterotetramer composed of a homodimer of the large subunit (R1) and a homodimer of the small subunit (R2). Larger multisubunit protein complex are also active, composed of (R1)n(R2)n.

It catalyses the reaction a 2'-deoxyribonucleoside 5'-diphosphate + [thioredoxin]-disulfide + H2O = a ribonucleoside 5'-diphosphate + [thioredoxin]-dithiol. With respect to regulation, under complex allosteric control mediated by deoxynucleoside triphosphates and ATP binding. The type of nucleotide bound at the specificity site determines substrate preference. It seems probable that ATP makes the enzyme reduce CDP and UDP, dGTP favors ADP reduction and dTTP favors GDP reduction. Ribonucleoside-diphosphate reductase holoenzyme provides the precursors necessary for viral DNA synthesis. Allows virus growth in non-dividing cells. Catalyzes the biosynthesis of deoxyribonucleotides from the corresponding ribonucleotides. This Aedes vexans (Inland floodwater mosquito) protein is Ribonucleoside-diphosphate reductase large subunit.